A 499-amino-acid chain; its full sequence is Glycerol kinase (499 aa).

Position 13 (T13) interacts with ADP. T13, T14, and S15 together coordinate ATP. T13 contacts sn-glycerol 3-phosphate. R17 lines the ADP pocket. Sn-glycerol 3-phosphate-binding residues include R83, E84, Y135, and D245. Residues R83, E84, Y135, D245, and Q246 each coordinate glycerol. The ADP site is built by T267 and G310. ATP-binding residues include T267, G310, Q314, and G411. ADP is bound by residues G411 and N415.

It belongs to the FGGY kinase family.

The enzyme catalyses glycerol + ATP = sn-glycerol 3-phosphate + ADP + H(+). It participates in polyol metabolism; glycerol degradation via glycerol kinase pathway; sn-glycerol 3-phosphate from glycerol: step 1/1. Inhibited by fructose 1,6-bisphosphate (FBP). Functionally, key enzyme in the regulation of glycerol uptake and metabolism. Catalyzes the phosphorylation of glycerol to yield sn-glycerol 3-phosphate. This is Glycerol kinase from Xanthomonas axonopodis pv. citri (strain 306).